Here is a 101-residue protein sequence, read N- to C-terminus: RNA-binding protein Hfq (101 aa).

In terms of domain architecture, Sm spans 9–68; it reads DPFLNALRRERVPVSIYLVNGIKLQGQVESFDQFVILLKNTVSQMVYKHAISTVVPSPPV. The tract at residues 62-101 is disordered; sequence VVPSPPVSHHSNTPSGSTNNYHGSNPSAPQQPQQDSDDAE. A compositionally biased stretch (polar residues) spans 70 to 86; it reads HHSNTPSGSTNNYHGSN.

Belongs to the Hfq family. In terms of assembly, homohexamer.

In terms of biological role, RNA chaperone that binds small regulatory RNA (sRNAs) and mRNAs to facilitate mRNA translational regulation in response to envelope stress, environmental stress and changes in metabolite concentrations. Also binds with high specificity to tRNAs. In Yersinia pestis (strain Pestoides F), this protein is RNA-binding protein Hfq.